Here is a 208-residue protein sequence, read N- to C-terminus: Small ribosomal subunit protein uS4A (208 aa).

Positions 98-164 (TRLDNVVYTL…AKIQSAIQAV (67 aa)) constitute an S4 RNA-binding domain.

The protein belongs to the universal ribosomal protein uS4 family. Part of the 30S ribosomal subunit. Contacts protein S5. The interaction surface between S4 and S5 is involved in control of translational fidelity.

One of the primary rRNA binding proteins, it binds directly to 16S rRNA where it nucleates assembly of the body of the 30S subunit. In terms of biological role, with S5 and S12 plays an important role in translational accuracy. The polypeptide is Small ribosomal subunit protein uS4A (Bdellovibrio bacteriovorus (strain ATCC 15356 / DSM 50701 / NCIMB 9529 / HD100)).